Reading from the N-terminus, the 297-residue chain is MIDLSTLTTERRNDETFNLDQMTVKEALVKMNNEDKKVAYAVEEVLPNIEPVISSAIEAFNKGGRLIYMGAGTSGRLGVLDAAECVPTFGVPATQVVGLIAGGDKAMTVAVEGAEDSLELGRQDLIDLNLSENDLVLGIAASGRTPYVIGALDYAKEIGAKRASLSCNLNAEISKHAEFPIEVDCGPEFLTGSTRLKSGTAQKLILNMISTISMIGIGKVYNNLMVDVKPTNEKLVERSKRIIMQATDCTYEEAEEKFNEANQDVKLAIVMLLTDCAAEEGKTKLVKANGFVKNTLN.

The 164-residue stretch at 56–219 (AIEAFNKGGR…STISMIGIGK (164 aa)) folds into the SIS domain. The Proton donor role is filled by glutamate 84. Glutamate 115 is a catalytic residue.

This sequence belongs to the GCKR-like family. MurNAc-6-P etherase subfamily. As to quaternary structure, homodimer.

It carries out the reaction N-acetyl-D-muramate 6-phosphate + H2O = N-acetyl-D-glucosamine 6-phosphate + (R)-lactate. Its pathway is amino-sugar metabolism; N-acetylmuramate degradation. Specifically catalyzes the cleavage of the D-lactyl ether substituent of MurNAc 6-phosphate, producing GlcNAc 6-phosphate and D-lactate. The chain is N-acetylmuramic acid 6-phosphate etherase from Lactococcus lactis subsp. cremoris (strain SK11).